A 55-amino-acid polypeptide reads, in one-letter code: Small integral membrane protein 11 (55 aa).

Residues valine 9–glycine 29 traverse the membrane as a helical segment. Residues glutamine 34–alanine 54 are a coiled coil.

As to expression, expressed in brain, heart, kidney, thymus, liver, stomach, muscle, lung, testis, ovary, skin and eye.

It is found in the membrane. This chain is Small integral membrane protein 11, found in Mus musculus (Mouse).